The following is a 244-amino-acid chain: MKIFVYYTPERVPDGTVAECAIAVDVLRATTTIATALAAGAEAIQVFSDLDKLIATSATWPAERCIRVGERGGKTVDGFDMGNSPFDCTPERVKACRLFMSTTNGTRSLQRIESAKTVIAAALVNREAVAKFIYTQQPETVWIVGSGWEGSYSLEDTVCAGAIAHSLLLATGIPLEDLAGNDETIAAIALYRSYREDLLSLLQQASHGKRLLNLNCHEDLKYCSQTDILDVLPVQQQPGVLVAH.

The protein belongs to the ComB family. Mg(2+) is required as a cofactor.

The catalysed reaction is (2R)-O-phospho-3-sulfolactate + H2O = (2R)-3-sulfolactate + phosphate. In Cyanothece sp. (strain PCC 7425 / ATCC 29141), this protein is Probable 2-phosphosulfolactate phosphatase.